The chain runs to 203 residues: Endothelin-1 (203 aa).

Positions 1–25 (MDYFPMIIALLFVAFQGAPETAVLG) are cleaved as a signal peptide. Residues 26 to 50 (AELSPEAESQGETPSPHASWRPRRS) constitute a propeptide that is removed on maturation. The disordered stretch occupies residues 27 to 48 (ELSPEAESQGETPSPHASWRPR). 2 cysteine pairs are disulfide-bonded: C53–C67 and C55–C63. Positions 83–203 (YGLGSPSRSR…DKKVTHNRTH (121 aa)) are excised as a propeptide. The endothelin-like stretch occupies residues 110–124 (CQCASQKDKKCWSFC). A glycan (N-linked (GlcNAc...) asparagine) is linked at N200.

This sequence belongs to the endothelin/sarafotoxin family.

The protein localises to the secreted. Its function is as follows. Endothelins are endothelium-derived vasoconstrictor peptides. Probable ligand for G-protein coupled receptors EDNRA and EDNRB which activates PTK2B, BCAR1, BCAR3 and, GTPases RAP1 and RHOA cascade in glomerular mesangial cells. Also binds the DEAR/FBXW7-AS1 receptor. Promotes mesenteric arterial wall remodeling via activation of ROCK signaling and subsequent colocalization of NFATC3 with F-actin filaments. NFATC3 then translocates to the nucleus where it subsequently promotes the transcription of the smooth muscle hypertrophy and differentiation marker ACTA2. In Sus scrofa (Pig), this protein is Endothelin-1 (EDN1).